The following is a 178-amino-acid chain: Small ribosomal subunit protein uS5 (178 aa).

One can recognise an S5 DRBM domain in the interval 15–78 (FEEKIIEIRR…SAAKRNIVEV (64 aa)).

This sequence belongs to the universal ribosomal protein uS5 family. As to quaternary structure, part of the 30S ribosomal subunit. Contacts proteins S4 and S8.

With S4 and S12 plays an important role in translational accuracy. In terms of biological role, located at the back of the 30S subunit body where it stabilizes the conformation of the head with respect to the body. This chain is Small ribosomal subunit protein uS5, found in Thermotoga maritima (strain ATCC 43589 / DSM 3109 / JCM 10099 / NBRC 100826 / MSB8).